Here is a 286-residue protein sequence, read N- to C-terminus: Bifunctional protein FolD (286 aa).

Residues 165–167 (GRS), serine 190, and valine 231 contribute to the NADP(+) site.

This sequence belongs to the tetrahydrofolate dehydrogenase/cyclohydrolase family. Homodimer.

It carries out the reaction (6R)-5,10-methylene-5,6,7,8-tetrahydrofolate + NADP(+) = (6R)-5,10-methenyltetrahydrofolate + NADPH. It catalyses the reaction (6R)-5,10-methenyltetrahydrofolate + H2O = (6R)-10-formyltetrahydrofolate + H(+). It participates in one-carbon metabolism; tetrahydrofolate interconversion. Catalyzes the oxidation of 5,10-methylenetetrahydrofolate to 5,10-methenyltetrahydrofolate and then the hydrolysis of 5,10-methenyltetrahydrofolate to 10-formyltetrahydrofolate. This is Bifunctional protein FolD from Bacillus cereus (strain ATCC 10987 / NRS 248).